A 75-amino-acid chain; its full sequence is Conotoxin TsMEKL-011 (75 aa).

A signal peptide spans 1–19 (MEKLTILLLVAAVLMSTQA). Positions 20–45 (LIQRGGAKRRKVNFFSIREPGAEDWR) are excised as a propeptide. 3 disulfides stabilise this stretch: cysteine 49/cysteine 63, cysteine 56/cysteine 67, and cysteine 62/cysteine 71.

This sequence belongs to the conotoxin O2 superfamily. Expressed by the venom duct.

It is found in the secreted. The sequence is that of Conotoxin TsMEKL-011 from Conus tessulatus (Tessellate cone).